A 460-amino-acid chain; its full sequence is Cysteine--tRNA ligase (460 aa).

Position 29 (C29) interacts with Zn(2+). The 'HIGH' region motif lies at 31–41 (ATPQSSPHIGH). Residues C212, H237, and E241 each contribute to the Zn(2+) site. The 'KMSKS' region motif lies at 268–272 (KMSKS). K271 provides a ligand contact to ATP.

It belongs to the class-I aminoacyl-tRNA synthetase family. As to quaternary structure, monomer. It depends on Zn(2+) as a cofactor.

It localises to the cytoplasm. It carries out the reaction tRNA(Cys) + L-cysteine + ATP = L-cysteinyl-tRNA(Cys) + AMP + diphosphate. The sequence is that of Cysteine--tRNA ligase from Corynebacterium glutamicum (strain R).